The primary structure comprises 530 residues: Autoinducer-2 kinase (530 aa).

It belongs to the FGGY kinase family.

It is found in the cytoplasm. It catalyses the reaction (S)-4,5-dihydroxypentane-2,3-dione + ATP = (2S)-2-hydroxy-3,4-dioxopentyl phosphate + ADP + H(+). Catalyzes the phosphorylation of autoinducer-2 (AI-2) to phospho-AI-2, which subsequently inactivates the transcriptional regulator LsrR and leads to the transcription of the lsr operon. Phosphorylates the ring-open form of (S)-4,5-dihydroxypentane-2,3-dione (DPD), which is the precursor to all AI-2 signaling molecules, at the C5 position. The chain is Autoinducer-2 kinase from Photorhabdus laumondii subsp. laumondii (strain DSM 15139 / CIP 105565 / TT01) (Photorhabdus luminescens subsp. laumondii).